A 247-amino-acid chain; its full sequence is Coproheme decarboxylase (247 aa).

Residues Arg-129, 143 to 147, His-170, Gln-183, and Ser-221 each bind Fe-coproporphyrin III; that span reads YPMDK. Tyr-143 is a catalytic residue.

Belongs to the ChdC family. Type 1 subfamily. The cofactor is Fe-coproporphyrin III.

It catalyses the reaction Fe-coproporphyrin III + 2 H2O2 + 2 H(+) = heme b + 2 CO2 + 4 H2O. It carries out the reaction Fe-coproporphyrin III + H2O2 + H(+) = harderoheme III + CO2 + 2 H2O. The enzyme catalyses harderoheme III + H2O2 + H(+) = heme b + CO2 + 2 H2O. It functions in the pathway porphyrin-containing compound metabolism; protoheme biosynthesis. Involved in coproporphyrin-dependent heme b biosynthesis. Catalyzes the decarboxylation of Fe-coproporphyrin III (coproheme) to heme b (protoheme IX), the last step of the pathway. The reaction occurs in a stepwise manner with a three-propionate intermediate. This is Coproheme decarboxylase from Bacillus mycoides (strain KBAB4) (Bacillus weihenstephanensis).